We begin with the raw amino-acid sequence, 73 residues long: Translation initiation factor IF-1 (73 aa).

In terms of domain architecture, S1-like spans 1 to 72; the sequence is MSKDDLIQFT…TKGRVILRHQ (72 aa).

The protein belongs to the IF-1 family. In terms of assembly, component of the 30S ribosomal translation pre-initiation complex which assembles on the 30S ribosome in the order IF-2 and IF-3, IF-1 and N-formylmethionyl-tRNA(fMet); mRNA recruitment can occur at any time during PIC assembly.

Its subcellular location is the cytoplasm. One of the essential components for the initiation of protein synthesis. Stabilizes the binding of IF-2 and IF-3 on the 30S subunit to which N-formylmethionyl-tRNA(fMet) subsequently binds. Helps modulate mRNA selection, yielding the 30S pre-initiation complex (PIC). Upon addition of the 50S ribosomal subunit IF-1, IF-2 and IF-3 are released leaving the mature 70S translation initiation complex. The sequence is that of Translation initiation factor IF-1 from Rickettsia bellii (strain OSU 85-389).